The chain runs to 343 residues: Dihydroorotase (343 aa).

His-13 and His-15 together coordinate Zn(2+). Substrate contacts are provided by residues 15–17 (HLR) and Asn-41. Residues Lys-99, His-136, and His-174 each coordinate Zn(2+). Position 99 is an N6-carboxylysine (Lys-99). His-136 is a substrate binding site. Leu-219 provides a ligand contact to substrate. Zn(2+) is bound at residue Asp-247. Asp-247 is an active-site residue. His-251 and Ala-263 together coordinate substrate.

The protein belongs to the metallo-dependent hydrolases superfamily. DHOase family. Class II DHOase subfamily. Homodimer. Zn(2+) is required as a cofactor.

The catalysed reaction is (S)-dihydroorotate + H2O = N-carbamoyl-L-aspartate + H(+). The protein operates within pyrimidine metabolism; UMP biosynthesis via de novo pathway; (S)-dihydroorotate from bicarbonate: step 3/3. Functionally, catalyzes the reversible cyclization of carbamoyl aspartate to dihydroorotate. This Alkalilimnicola ehrlichii (strain ATCC BAA-1101 / DSM 17681 / MLHE-1) protein is Dihydroorotase.